Consider the following 278-residue polypeptide: ABC transporter I family member 11, chloroplastic (278 aa).

Residues 1-49 (MAVSTFSSPTPVFGIAEPPASFSSTAIGWKQPLRFRRTKKPRVISCDYS) constitute a chloroplast transit peptide. An ABC transporter domain is found at 51-278 (IEVRDVCYRP…GVLVAERPPL (228 aa)). An ATP-binding site is contributed by 85 to 92 (GKSGSGKT).

It belongs to the ABC transporter superfamily. ABCI family.

It is found in the plastid. The protein localises to the chloroplast. This Arabidopsis thaliana (Mouse-ear cress) protein is ABC transporter I family member 11, chloroplastic (ABCI11).